The primary structure comprises 93 residues: MTRKKMNPFVAHHLLAKIEKVNMKEEKETIVTWSRASSILPTMVGHTIAIHNGKEHIPIYITNPMVGRKLGEFVPTRHFTSYENARKDTKSRR.

It belongs to the universal ribosomal protein uS19 family.

The protein resides in the plastid. Its subcellular location is the chloroplast. In terms of biological role, protein S19 forms a complex with S13 that binds strongly to the 16S ribosomal RNA. The sequence is that of Small ribosomal subunit protein uS19c from Lolium perenne (Perennial ryegrass).